The primary structure comprises 448 residues: Phosphoglucosamine mutase (448 aa).

Ser-100 serves as the catalytic Phosphoserine intermediate. Mg(2+) is bound by residues Ser-100, Asp-240, Asp-242, and Asp-244. Ser-100 is subject to Phosphoserine.

The protein belongs to the phosphohexose mutase family. The cofactor is Mg(2+). In terms of processing, activated by phosphorylation.

It carries out the reaction alpha-D-glucosamine 1-phosphate = D-glucosamine 6-phosphate. In terms of biological role, catalyzes the conversion of glucosamine-6-phosphate to glucosamine-1-phosphate. The protein is Phosphoglucosamine mutase of Clostridium beijerinckii (strain ATCC 51743 / NCIMB 8052) (Clostridium acetobutylicum).